A 945-amino-acid chain; its full sequence is Isoleucine--tRNA ligase 1 (945 aa).

Residues 66–76 (PYANGDIHLGH) carry the 'HIGH' region motif. Position 581 (E581) interacts with L-isoleucyl-5'-AMP. A 'KMSKS' region motif is present at residues 622–626 (KMSKS). ATP is bound at residue K625. Zn(2+) contacts are provided by C908, C911, C928, and C931.

Belongs to the class-I aminoacyl-tRNA synthetase family. IleS type 1 subfamily. As to quaternary structure, monomer. It depends on Zn(2+) as a cofactor.

It localises to the cytoplasm. It carries out the reaction tRNA(Ile) + L-isoleucine + ATP = L-isoleucyl-tRNA(Ile) + AMP + diphosphate. In terms of biological role, catalyzes the attachment of isoleucine to tRNA(Ile). As IleRS can inadvertently accommodate and process structurally similar amino acids such as valine, to avoid such errors it has two additional distinct tRNA(Ile)-dependent editing activities. One activity is designated as 'pretransfer' editing and involves the hydrolysis of activated Val-AMP. The other activity is designated 'posttransfer' editing and involves deacylation of mischarged Val-tRNA(Ile). The polypeptide is Isoleucine--tRNA ligase 1 (Burkholderia pseudomallei (strain K96243)).